Reading from the N-terminus, the 546-residue chain is MGSRNSSSAGSGSGDPSEGLPRRGAGLRRSEEEEEEDEDVDLAQVLAYLLRRGQVRLVQGGGAANLQFIQALLDSEEENDRAWDGRLGDRYNPPVDATPDTRELEFNEIKTQVELATGQLGLRRAAQKHSFPRMLHQRERGLCHRGSFSLGEQSRVISHFLPNDLGFTDSYSQKAFCGIYSKDGQIFMSACQDQTIRLYDCRYGRFRKFKSIKARDVGWSVLDVAFTPDGNHFLYSSWSDYIHICNIYGEGDTHTALDLRPDERRFAVFSIAVSSDGREVLGGANDGCLYVFDREQNRRTLQIESHEDDVNAVAFADISSQILFSGGDDAICKVWDRRTMREDDPKPVGALAGHQDGITFIDSKGDARYLISNSKDQTIKLWDIRRFSSREGMEASRQAATQQNWDYRWQQVPKKAWRKLKLPGDSSLMTYRGHGVLHTLIRCRFSPIHSTGQQFIYSGCSTGKVVVYDLLSGHIVKKLTNHKACVRDVSWHPFEEKIVSSSWDGNLRLWQYRQAEYFQDDMPESEECASAPAPVPQSSTPFSSPQ.

Residues 1–19 are compositionally biased toward low complexity; that stretch reads MGSRNSSSAGSGSGDPSEG. The segment at 1–40 is disordered; sequence MGSRNSSSAGSGSGDPSEGLPRRGAGLRRSEEEEEEDEDV. Phosphoserine occurs at positions 49 and 75. WD repeat units lie at residues 170–210, 216–258, 263–302, 305–345, 353–392, 435–480, and 481–520; these read SYSQ…RKFK, DVGW…TALD, ERRF…RTLQ, SHED…EDDP, GHQD…SREG, GVLH…KKLT, and NHKA…YFQD. The segment at 523–546 is disordered; the sequence is PESEECASAPAPVPQSSTPFSSPQ. The segment covering 536-546 has biased composition (polar residues); sequence PQSSTPFSSPQ.

In terms of assembly, interacts with DDB1 and CUL4A.

The protein operates within protein modification; protein ubiquitination. Its function is as follows. May function as a substrate receptor for CUL4-DDB1 E3 ubiquitin-protein ligase complex. This Homo sapiens (Human) protein is DDB1- and CUL4-associated factor 11 (DCAF11).